Consider the following 307-residue polypeptide: D-alanine--D-alanine ligase (307 aa).

Positions 105–304 (KMLWKGFGLP…FEQLVVKILE (200 aa)) constitute an ATP-grasp domain. 135-190 (VERLGLPLMVKPSREGSSVGLTKVNAVEELKNAVDLALTHDDTVLIEEWLSGIEMT) is a binding site for ATP. Mg(2+) contacts are provided by D258, E271, and N273.

It belongs to the D-alanine--D-alanine ligase family. It depends on Mg(2+) as a cofactor. Mn(2+) is required as a cofactor.

The protein localises to the cytoplasm. The enzyme catalyses 2 D-alanine + ATP = D-alanyl-D-alanine + ADP + phosphate + H(+). The protein operates within cell wall biogenesis; peptidoglycan biosynthesis. Functionally, cell wall formation. The polypeptide is D-alanine--D-alanine ligase (Mannheimia succiniciproducens (strain KCTC 0769BP / MBEL55E)).